The primary structure comprises 2462 residues: MGPQTPSSEPPRPVTVFFGPVYPELTQSSSRIRQYLADKASAGWLDDTLQGLPSTWQDIMRQWPALKKIPGESLLRQLTQYLCRESSCPVGDTLNLLLVPVTVLRHIVEFQQLKDEKKHLEIRDVQGFCVGVLAAITASWEHDDAEFPKVVSTVLRVAVCIGALVDLDEVNGSSSKSMAVRWKTKCEYRHLGQVLERYKGYIACMIKTNGATVTVPTANYLSLAEELESHGISVKNLPLRGRFHTADHIPAMKQLLALCARDARFQLPIKKNLPLLPRSNVDGTRLPSNVLMAAAVESILAKQANWMLTVAEALNSEGPPDEKHAVVIGAGQIIPQRSLLASVEHIGDQMAPTDTSLHRPSPTIDIRPTAQCNGTSPETSTQAVSAPIAVTGFACRYPQADSVEALWTLLERGQCTVSSMPNHRLKADSLQRQPRGPFWGNYLESPESFDHRFFGVSAREAESMDPQQRLLLQVAYEAIESATYCGLRATKLPDDVGCYIGVGSDDYSQNVGSRDATAFSATGTLQAFNSGRISHFFGWSGPSITVDTACSSAAVAIHLACRALQANDCSIAVAGGVNVMTDPRWSQNLAAASFLSPTGASKAFDAAADGYCRGEGAGLLVLRPLDAALRDGDPIHAVITGTCVNQGANCSPITVPDSNSQRSLYMKALAQSGLHPDAVCYVEAHGTGTQVGDPIEYESIRCTFGGPQRTETVYIGSIKDNIGHTETSSGAAGMVKTILMIQKRRIPKQANFSCLNPRIVTHERDQIAIPTQSLEWKAAKRVALVTNYGAAGSNAVIVVKEPIKPGVDRSTWPARVPFIITAKTEESLREYCRELQHTLLAQQQGSGSATHHLAYNLAAKQNRCLEYQLSFSCEPAEVATRLQDIAAGRSKPTRCTAPSPPVVLCFGGQTGDTASISPTLVENCDILRSHLTQCDEVCHALGLPGLFPTIFSPEPRTDLVSLHCILFSIQYASAKAWLDCGLVVDRMIGHSFGQLTAICVAGGLSLIDGLRLVSKRAALIQEKWGPERGVMLSLKVTKTQVQELLCAASGTVDVACFNGPQSFVLAGNEKSIAQVETLCVQRGLEHHKKRLRNTHAFHSRLVEPLLPELSQVADTLDYSPLRIPVEACSEEPDHWARLTASKVVRHSREPVYFHPAVQRTLRHIPGPCVWLEAGSASPIVGMVRRVVKASGPGGEHTYLPIDLQESTAECNLADVTKVLWSKGVPVQFWAFHGSPAGYKWINLPPYQFSKTRHWIDYDPYAFHPTGALSEEEKHDDGLLQLVERDANGCLFRINNQDPAYRMCTEGHAVVDQNLCPASLYVEIVVRGAMTLSANGQAAAMAHIEALSISAPLVVDMPGSVCLSVTQIANNNDGGWMFSLFSQDGDRTPITHATGKVLLDPQAAGSAASARFHSLKRLLDPGQFDSIPKSPSSNGLKRATVYQAFRRAVNYADYYRGVEEVYAVGHRAAGRVLLPSSPTRMAACDPILMDNFLQVAGIHVNCLSETDEDEVFVCSSVGEVSLGSRYLNRDAATPQAWTVYSTYERESGKRVTCDVFALDEDRMLAVTIMSATFTSVSIQSLKRTLSRLNGHSSSLGQHEPQLQEKLAPAAHITVSDDHHLRAVQSMLGDLLGVSPGELPGNAPLAEIGVDSLMSTEVLAEVDKRFGVNITNTELADIADVRGLAHRISPSSSVVHVETSKESSVANDISVGGQQPIIESPPVTHQEDSPRFADRAITAFAATRGSTKYIDLTQFSAFCTSVYPQQMRLVTAYVAEAFQALGANLESMLPGQSIPSLAILPQHNQVLGQLIGVLEYAGLVEQKSTGLFRTGKPVDVGPSAVLHQTILGDYPQHASEHKLLRTTGARLAECLTGTADPLSLLFQDAQARALMQDVYSNAPMFKAATMQLAQYLQDLLLDSGCDREIEILEIGAGTGGTTAFLVSQLAAMPGVKFKYTFTDLSSSLVTLARKRFGSYSFMRYSTLDIEKMPRDELLGKYDIILSSNCIHATRSLAASCMHIRKMLRPHGLLCLIELTRNLPWFDLVFGLLGGWWLFNDGRSHALANESLWDTRLREAGFNWVDWTDNPLEESDILRLIVASPTMASPPLPVKQPITPARVETVRYGERAGVQLMADIYYPHTVDAKGTKRPIALLIHGGGHIMLSRKDIRPYQVDLLLDAGFLPVSIDYRLCPEVSLLEGPMPDVRDALAWARADLPRQSLSRTDIQPDGDRVVAVGWSTGGHLAMTLSWTAPEHGILPPQAILAFYSPTDYTDPFWTTPNFPYAGAVSEEDTKLTRPLDALRDSPITAYNPPANKHALGGWMAPSDPRSQIALYMNWTGQALPVLFNGCNYKKLAAAKGPTTSEVILPAPPLADVQRACPLSQIVAGRYKTPTFLIHGGLDDLIPVQQAERTQDAMRAAGVESTLRVVQGGLHLFDLGIDISAVDEDGPRAVREGYEFLRQHVAV.

Residues 16–253 are N-terminal acylcarrier protein transacylase domain (SAT); the sequence is VFFGPVYPEL…HTADHIPAMK (238 aa). The Ketosynthase family 3 (KS3) domain maps to 385–801; it reads SAPIAVTGFA…GSNAVIVVKE (417 aa). Catalysis depends on for beta-ketoacyl synthase activity residues cysteine 550, histidine 685, and histidine 724. Residues 904-1208 are malonyl-CoA:ACP transacylase (MAT) domain; it reads LCFGGQTGDT…LPIDLQESTA (305 aa). The For acyl/malonyl transferase activity role is filled by serine 991. The segment at 1274–1403 is N-terminal hotdog fold; that stretch reads HDDGLLQLVE…GKVLLDPQAA (130 aa). Residues 1274-1581 enclose the PKS/mFAS DH domain; that stretch reads HDDGLLQLVE…FTSVSIQSLK (308 aa). The product template (PT) domain stretch occupies residues 1277 to 1580; that stretch reads GLLQLVERDA…TFTSVSIQSL (304 aa). The active-site Proton acceptor; for dehydratase activity is histidine 1307. The C-terminal hotdog fold stretch occupies residues 1431–1581; it reads SSNGLKRATV…FTSVSIQSLK (151 aa). Aspartate 1489 serves as the catalytic Proton donor; for dehydratase activity. Residues 1613-1690 form the Carrier domain; sequence VSDDHHLRAV…GLAHRISPSS (78 aa). At serine 1650 the chain carries O-(pantetheine 4'-phosphoryl)serine. The tract at residues 1850–2083 is methyltransferase (CMeT) domain; the sequence is QHASEHKLLR…GFNWVDWTDN (234 aa). The tract at residues 2112–2462 is thioesterase (TE) domain; the sequence is TPARVETVRY…YEFLRQHVAV (351 aa). Active-site for thioesterase activity residues include serine 2235, aspartate 2398, and histidine 2430.

The enzyme catalyses 3 malonyl-CoA + acetyl-CoA + 2 S-adenosyl-L-methionine = 3,5-dimethylorsellinate + 2 S-adenosyl-L-homocysteine + 3 CO2 + 4 CoA. It participates in secondary metabolite biosynthesis; terpenoid biosynthesis. Functionally, non-reducing polyketide synthase; part of the gene cluster that mediates the biosynthesis of calidodehydroaustin, a fungal meroterpenoid. The first step of the pathway is the synthesis of 3,5-dimethylorsellinic acid by the polyketide synthase ausA. 3,5-dimethylorsellinic acid is then prenylated by the polyprenyl transferase ausN. Further epoxidation by the FAD-dependent monooxygenase ausM and cyclization by the probable terpene cyclase ausL lead to the formation of protoaustinoid A. Protoaustinoid A is then oxidized to spiro-lactone preaustinoid A3 by the combined action of the FAD-binding monooxygenases ausB and ausC, and the dioxygenase ausE. Acid-catalyzed keto-rearrangement and ring contraction of the tetraketide portion of preaustinoid A3 by ausJ lead to the formation of preaustinoid A4. The aldo-keto reductase ausK, with the help of ausH, is involved in the next step by transforming preaustinoid A4 into isoaustinone which is in turn hydroxylated by the P450 monooxygenase ausI to form austinolide. The cytochrome P450 monooxygenase ausG modifies austinolide to austinol. Austinol is further acetylated to austin by the O-acetyltransferase ausP, which spontaneously changes to dehydroaustin. The cytochrome P450 monooxygenase ausR then converts dehydroaustin is into 7-dehydrodehydroaustin. The hydroxylation catalyzed by ausR permits the O-acetyltransferase ausQ to add an additional acetyl group to the molecule, leading to the formation of acetoxydehydroaustin. The short chain dehydrogenase ausT catalyzes the reduction of the double bond present between carbon atoms 1 and 2 to convert 7-dehydrodehydroaustin into 1,2-dihydro-7-hydroxydehydroaustin. AusQ catalyzes not only an acetylation reaction but also the addition of the PKS ausV diketide product to 1,2-dihydro-7-hydroxydehydroaustin, forming precalidodehydroaustin. Finally, the iron/alpha-ketoglutarate-dependent dioxygenase converts precalidodehydroaustin into calidodehydroaustin. The sequence is that of Non-reducing polyketide synthase ausA from Aspergillus calidoustus.